The sequence spans 196 residues: Putative archaetidylserine decarboxylase proenzyme (196 aa).

The Schiff-base intermediate with substrate; via pyruvic acid role is filled by S164. Position 164 is a pyruvic acid (Ser); by autocatalysis (S164).

This sequence belongs to the phosphatidylserine decarboxylase family. PSD-A subfamily. Heterodimer of a large membrane-associated beta subunit and a small pyruvoyl-containing alpha subunit. Requires pyruvate as cofactor. Post-translationally, is synthesized initially as an inactive proenzyme. Formation of the active enzyme involves a self-maturation process in which the active site pyruvoyl group is generated from an internal serine residue via an autocatalytic post-translational modification. Two non-identical subunits are generated from the proenzyme in this reaction, and the pyruvate is formed at the N-terminus of the alpha chain, which is derived from the carboxyl end of the proenzyme. The post-translation cleavage follows an unusual pathway, termed non-hydrolytic serinolysis, in which the side chain hydroxyl group of the serine supplies its oxygen atom to form the C-terminus of the beta chain, while the remainder of the serine residue undergoes an oxidative deamination to produce ammonia and the pyruvoyl prosthetic group on the alpha chain.

The protein localises to the cell membrane. It catalyses the reaction archaetidylserine + H(+) = archaetidylethanolamine + CO2. Functionally, catalyzes the formation of archaetidylethanolamine (PtdEtn) from archaetidylserine (PtdSer). The protein is Putative archaetidylserine decarboxylase proenzyme of Halobacterium salinarum (strain ATCC 700922 / JCM 11081 / NRC-1) (Halobacterium halobium).